The chain runs to 74 residues: U-scoloptoxin(09)-Sm3a (74 aa).

The signal sequence occupies residues 1-22 (MNANSIFLCFFIMLIGCTLTHS).

This sequence belongs to the scoloptoxin-09 family. In terms of processing, contains 3 disulfide bonds. As to expression, expressed by the venom gland.

Its subcellular location is the secreted. This Scolopendra morsitans (Tanzanian blue ringleg centipede) protein is U-scoloptoxin(09)-Sm3a.